A 158-amino-acid chain; its full sequence is Glycine-rich RNA-binding protein 2, mitochondrial (158 aa).

The N-terminal 34 residues, 1-34 (MAFCNKLGGLLRQNISSNGNVPVTSMLGSLRLMS), are a transit peptide targeting the mitochondrion. An RRM domain is found at 35–113 (TKLFIGGLSW…RHIRVNPAND (79 aa)). The residue at position 43 (Ser-43) is a Phosphoserine. Residues 122-157 (GGGGGYSGGGGGYGGGGGGYGGGGGGYGGGGDGGGG) form a glycine-rich (GR) required for cell-to-cell movement region.

Belongs to the GR-RBP family. In terms of assembly, binds to small phloem-mobile single-stranded RNAs (ss-sRNA, e.g. small interfering RNA (siRNA) and microRNA (miRNA)) in the phloeme exudate, including viral-derived sRNA (vsiRNA). Interacts with ORRM2, RBG3/ORRM3 and RBG5/ORRM4.

The protein resides in the mitochondrion. Its subcellular location is the secreted. Promotes the cis-splicing and editing of several mitochondrial RNAs (including NAD5 transcripts). Plays a role in RNA transcription or processing during stress. Binds RNAs and DNAs sequence with a preference to single-stranded nucleic acids. Displays strong affinity to poly(U) sequence. Exerts cold and freezing tolerance, probably by exhibiting an RNA chaperone activity during the cold and freezing adaptation process. Mediates cell-to-cell trafficking of RNA interference (RNAi) signals (small RNAs (sRNA), e.g. small interfering RNA (siRNA) and microRNA (miRNA)) which regulate growth and development, as well as responses to environmental inputs, including pathogen attack; can compromise zucchini yellow mosaic virus (ZYMV) and tobacco rattle virus (TRV) infections at the early stage. In Arabidopsis thaliana (Mouse-ear cress), this protein is Glycine-rich RNA-binding protein 2, mitochondrial.